Here is a 302-residue protein sequence, read N- to C-terminus: MQQLLNEILDEVRPLIGRGKVADYIPALAGVEPNQLGIAVYSRDGELFHAGDALRPFSIQSISKVFSLVQAIQHSGEDIWQRLGHEPSGQPFNSLVQLEFERGKPRNPFINAGALVICDINQSRFAAPAQSMRDFVRRLCGNPEVVSDSVVARSEYQHRSRNAAAAYLMKSFGNFHNDVEAVLLSYFHHCALRMSCVDLARAFCFLADKGFCKHSGEQVLNERQTKQVNAIMATSGLYDEAGNFAYRVGLPGKSGVGGGIIAVVPGRFTVCVWSPELNAAGNSLAGIAALEKLSERIGWSIF.

The substrate site is built by Ser61, Asn111, Glu155, Asn162, Tyr186, Tyr238, and Val256.

The protein belongs to the glutaminase family. In terms of assembly, homotetramer.

It catalyses the reaction L-glutamine + H2O = L-glutamate + NH4(+). This is Glutaminase from Pseudomonas aeruginosa (strain LESB58).